The chain runs to 302 residues: MTKTKAIDIIGAPSTFGQRKLGVDLGPTAIRYAGLISRLKQLDLDVYDKGDIKVPVVNIEKFHSEQKGLRNYDEIIDVNQKLNKEVSASIENNRFPLVLGGDHSIAVGSVSAISKHYNNLGVIWYDAHGDLNIPEESPSGNIHGMPLRILTGEGPKELLELNSNVIKPENIVLIGMRDLDKGERQFIKDHNIKTFTMSDIDKLGIKEVIENTIEYLKSRNVDGVHLSLDVDALDPLETPGTGTRVLGGLSYRESHFALELLHQSHLISSMDLVEVNPLIDSNNHTAEQAVSLVGTFFGETLL.

4 residues coordinate Mn(2+): H103, D126, H128, and D130. Substrate-binding positions include 128 to 132, 139 to 141, and D180; these read HGDLN and SGN. Residues D229 and D231 each contribute to the Mn(2+) site. Residues T243 and E274 each contribute to the substrate site.

Belongs to the arginase family. Requires Mn(2+) as cofactor.

The enzyme catalyses L-arginine + H2O = urea + L-ornithine. It participates in nitrogen metabolism; urea cycle; L-ornithine and urea from L-arginine: step 1/1. This Staphylococcus aureus (strain MSSA476) protein is Arginase (arg).